The sequence spans 198 residues: NADH-quinone oxidoreductase subunit C (198 aa).

This sequence belongs to the complex I 30 kDa subunit family. NDH-1 is composed of 14 different subunits. Subunits NuoB, C, D, E, F, and G constitute the peripheral sector of the complex.

The protein localises to the cell inner membrane. It catalyses the reaction a quinone + NADH + 5 H(+)(in) = a quinol + NAD(+) + 4 H(+)(out). Its function is as follows. NDH-1 shuttles electrons from NADH, via FMN and iron-sulfur (Fe-S) centers, to quinones in the respiratory chain. The immediate electron acceptor for the enzyme in this species is believed to be ubiquinone. Couples the redox reaction to proton translocation (for every two electrons transferred, four hydrogen ions are translocated across the cytoplasmic membrane), and thus conserves the redox energy in a proton gradient. This chain is NADH-quinone oxidoreductase subunit C, found in Janthinobacterium sp. (strain Marseille) (Minibacterium massiliensis).